Reading from the N-terminus, the 69-residue chain is Large ribosomal subunit protein bL31 (69 aa).

It belongs to the bacterial ribosomal protein bL31 family. Type A subfamily. Part of the 50S ribosomal subunit.

Functionally, binds the 23S rRNA. The chain is Large ribosomal subunit protein bL31 from Magnetococcus marinus (strain ATCC BAA-1437 / JCM 17883 / MC-1).